We begin with the raw amino-acid sequence, 391 residues long: D-gluconate/D-galactonate dehydratase (391 aa).

Position 198 (Glu198) interacts with Mg(2+). His200 serves as the catalytic Proton donor. Residues Glu224 and Glu250 each contribute to the Mg(2+) site. The Proton acceptor role is filled by His300.

The protein belongs to the mandelate racemase/muconate lactonizing enzyme family. GaD subfamily. In terms of assembly, homooctamer. The cofactor is Mg(2+).

It carries out the reaction D-gluconate = 2-dehydro-3-deoxy-D-gluconate + H2O. It catalyses the reaction D-galactonate = 2-dehydro-3-deoxy-D-galactonate + H2O. It functions in the pathway carbohydrate acid metabolism; D-gluconate degradation. Its function is as follows. Involved in the degradation of glucose and galactose via the nonphosphorylative variant of Entner-Doudoroff pathway. Catalyzes the dehydration of gluconate to produce 2-keto-3-deoxygluconate (KDG). It is also able to catalyze the dehydration of galactonate to produce 2-keto-3-deoxygalactonate (KDGal). The protein is D-gluconate/D-galactonate dehydratase of Picrophilus torridus (strain ATCC 700027 / DSM 9790 / JCM 10055 / NBRC 100828 / KAW 2/3).